We begin with the raw amino-acid sequence, 127 residues long: Protein FAM229A (127 aa).

The disordered stretch occupies residues 1-96 (MLPSSTPGPG…ATEHNPVRPL (96 aa)). The segment covering 24 to 39 (RSPAARAPAAASSLGP) has biased composition (low complexity).

It belongs to the FAM229 family.

In Homo sapiens (Human), this protein is Protein FAM229A (FAM229A).